The sequence spans 39 residues: Phospholipase A2 (39 aa).

The Ca(2+) site is built by Trp-10, Gly-12, and Gly-14. Cys-11 and Cys-33 form a disulfide bridge. His-36 is an active-site residue. Asp-37 is a Ca(2+) binding site.

Ca(2+) serves as cofactor. As to expression, expressed uniformly in tentacles (at protein level).

The protein resides in the secreted. The protein localises to the nematocyst. The catalysed reaction is a 1,2-diacyl-sn-glycero-3-phosphocholine + H2O = a 1-acyl-sn-glycero-3-phosphocholine + a fatty acid + H(+). With respect to regulation, inhibited by morin and p-BPB. PA2 catalyzes the calcium-dependent hydrolysis of the 2-acyl groups in 3-sn-phosphoglycerides. Induces insulin secretion in isolated rat islets under high glucose concentration conditions, but not under low glucose concentration conditions. Increases perfusion pressure, renal vascular resistance, urinary flow, glomerular filtration rate, and potassium, sodium, and chloride excretion levels in rat kidney. Does not increase perfusion pressure in the rat mesenteric vascular bed. The sequence is that of Phospholipase A2 from Bunodosoma caissarum (Sea anemone).